We begin with the raw amino-acid sequence, 340 residues long: Serpentine receptor class alpha-23 (340 aa).

6 helical membrane-spanning segments follow: residues 34-54 (FIST…QALW), 114-136 (YFYY…DRLI), 150-170 (FIAI…FYIA), 199-219 (VRTV…YLSV), 250-270 (ILIV…NLLL), and 284-304 (VGAF…AIYF).

This sequence belongs to the nematode receptor-like protein sra family.

The protein resides in the membrane. The protein is Serpentine receptor class alpha-23 (sra-23) of Caenorhabditis elegans.